We begin with the raw amino-acid sequence, 175 residues long: Inorganic pyrophosphatase (175 aa).

K30, R44, and Y56 together coordinate substrate. Mg(2+) is bound by residues D66, D71, and D103. Residue Y142 participates in substrate binding.

It belongs to the PPase family. Homohexamer. Requires Mg(2+) as cofactor.

The protein resides in the cytoplasm. It catalyses the reaction diphosphate + H2O = 2 phosphate + H(+). Catalyzes the hydrolysis of inorganic pyrophosphate (PPi) forming two phosphate ions. In Buchnera aphidicola subsp. Baizongia pistaciae (strain Bp), this protein is Inorganic pyrophosphatase.